Reading from the N-terminus, the 266-residue chain is Enoyl-CoA hydratase EchA19 (266 aa).

The active site involves E120. K135 bears the N6-succinyllysine mark. E140 is a catalytic residue. K142 carries the N6-succinyllysine modification.

Belongs to the enoyl-CoA hydratase/isomerase family. In terms of assembly, homotrimer; substrate probably binds in elongated tunnels between the subunits. Succinylated in vitro at pH 8.1, succinylation reduces specific activity of the enzyme 5.5-fold; succinyl-CoA is a downstream by-product of cholesterol degradation. Can be de-succinylated in vitro by NAD-dependent protein deacylase (AC P9WGG3). Succinylation may be a negative feedback regulator of cholesterol metabolism.

The enzyme catalyses (22E)-3-oxochola-4,22-dien-24-oyl-CoA + H2O = (22R)-hydroxy-3-oxo-chol-4-ene-24-oyl-CoA. Its pathway is steroid metabolism; cholesterol degradation. Degradation of the cholesterol side chain involves 3 multistep beta-oxidation cycles, this may be involved in the second cycle. Hydrates 3-OCDO-CoA ((22E)-3-oxo-chol-4,22-dien-24-oyl-CoA) to make (22R)-HOCO-CoA (3-oxo-chol-4-ene-(22R)-hydroxy-24-oyl-CoA). Also acts on octenoyl-CoA. Not active on (E)-3-OCDS-CoA ((E)-3-oxocholest-4,24-dien-26-oyl-CoA) or 3-OPDC-CoA (3-oxo-4,17-pregnadiene-20-carboxyl-CoA). Hydrates the same substrate as ChsH3, but the 2 enzymes make different stereoisomers of the product. This chain is Enoyl-CoA hydratase EchA19, found in Mycobacterium tuberculosis (strain ATCC 25618 / H37Rv).